Reading from the N-terminus, the 457-residue chain is Siroheme synthase 2 (457 aa).

The tract at residues Met-1–Thr-204 is precorrin-2 dehydrogenase /sirohydrochlorin ferrochelatase. NAD(+) contacts are provided by residues Asp-22–Val-23 and Leu-43–Asp-44. Ser-128 carries the phosphoserine modification. The segment at Gly-216–His-457 is uroporphyrinogen-III C-methyltransferase. Pro-225 lines the S-adenosyl-L-methionine pocket. The active-site Proton acceptor is Asp-248. Lys-270 (proton donor) is an active-site residue. Residues Gly-301 to Asp-303, Ile-306, Thr-331 to Ala-332, Met-382, and Gly-411 contribute to the S-adenosyl-L-methionine site.

In the N-terminal section; belongs to the precorrin-2 dehydrogenase / sirohydrochlorin ferrochelatase family. It in the C-terminal section; belongs to the precorrin methyltransferase family.

The catalysed reaction is uroporphyrinogen III + 2 S-adenosyl-L-methionine = precorrin-2 + 2 S-adenosyl-L-homocysteine + H(+). It carries out the reaction precorrin-2 + NAD(+) = sirohydrochlorin + NADH + 2 H(+). The enzyme catalyses siroheme + 2 H(+) = sirohydrochlorin + Fe(2+). It functions in the pathway cofactor biosynthesis; adenosylcobalamin biosynthesis; precorrin-2 from uroporphyrinogen III: step 1/1. The protein operates within cofactor biosynthesis; adenosylcobalamin biosynthesis; sirohydrochlorin from precorrin-2: step 1/1. Its pathway is porphyrin-containing compound metabolism; siroheme biosynthesis; precorrin-2 from uroporphyrinogen III: step 1/1. It participates in porphyrin-containing compound metabolism; siroheme biosynthesis; siroheme from sirohydrochlorin: step 1/1. It functions in the pathway porphyrin-containing compound metabolism; siroheme biosynthesis; sirohydrochlorin from precorrin-2: step 1/1. Its function is as follows. Multifunctional enzyme that catalyzes the SAM-dependent methylations of uroporphyrinogen III at position C-2 and C-7 to form precorrin-2 via precorrin-1. Then it catalyzes the NAD-dependent ring dehydrogenation of precorrin-2 to yield sirohydrochlorin. Finally, it catalyzes the ferrochelation of sirohydrochlorin to yield siroheme. The chain is Siroheme synthase 2 from Klebsiella pneumoniae subsp. pneumoniae (strain ATCC 700721 / MGH 78578).